Here is a 327-residue protein sequence, read N- to C-terminus: Acyl-CoA desaturase (327 aa).

The Cytoplasmic portion of the chain corresponds to 1–39 (MPDREIKSPIWHPEPGTVEDVFDHTYKEKEGPKPPTVIV). A helical membrane pass occupies residues 40–60 (WRNVILMSLLHLGALYGLFLF). Asn42 lines the substrate pocket. Residues 61-64 (PSAR) are Lumenal-facing. Residues 65-85 (ALTWIWFFGCLLFSALGITAG) form a helical membrane-spanning segment. Residues 86–184 (AHRLWSHRSY…DKVVMFQRRF (99 aa)) lie on the Cytoplasmic side of the membrane. His87 and His92 together coordinate Fe cation. The Histidine box-1 signature appears at 87-92 (HRLWSH). Residues Asn115, Arg122, and Asp123 each coordinate substrate. Residues His124, His127, and His128 each coordinate Fe cation. The Histidine box-2 signature appears at 124 to 128 (HRVHH). Substrate-binding residues include Arg155 and Lys156. A helical transmembrane segment spans residues 185-204 (YKPSVLLMCFFVPTFVPWYV). The Lumenal portion of the chain corresponds to 205–208 (WGES). The chain crosses the membrane as a helical span at residues 209-230 (LWVAYFVPALLRYALVLNATWL). Trp229 lines the substrate pocket. Topologically, residues 231 to 327 (VNSAAHMWGN…RTGDGSHWSG (97 aa)) are cytoplasmic. Residues His236, His265, His268, and His269 each contribute to the Fe cation site. Residues 265–269 (HNYHH) carry the Histidine box-3 motif.

The protein belongs to the fatty acid desaturase type 1 family. Fe(2+) serves as cofactor.

The protein resides in the endoplasmic reticulum membrane. The enzyme catalyses octadecanoyl-CoA + 2 Fe(II)-[cytochrome b5] + O2 + 2 H(+) = (9Z)-octadecenoyl-CoA + 2 Fe(III)-[cytochrome b5] + 2 H2O. In terms of biological role, stearoyl-CoA desaturase that utilizes O(2) and electrons from reduced cytochrome b5 to introduce the first double bond into saturated fatty acyl-CoA substrates. Has high specificity and catalyzes the insertion of a cis double bond at the delta-9 position into fatty acyl-CoA substrates including palmitoyl-CoA and stearoyl-CoA. Contributes to the biosynthesis of membrane phospholipids, cholesterol esters and triglycerides. This chain is Acyl-CoA desaturase, found in Cyprinus carpio (Common carp).